The chain runs to 754 residues: Zinc finger protein with KRAB and SCAN domains 7 (754 aa).

K28 is covalently cross-linked (Glycyl lysine isopeptide (Lys-Gly) (interchain with G-Cter in SUMO2)). The 83-residue stretch at 54 to 136 (RLHFRQLCYH…AVVEDFQRHL (83 aa)) folds into the SCAN box domain. Positions 157-215 (TALGTTKESPPTSPLSGGSAPGAHLEPPYDPGTHHLPSGDFAQCTSPVPTLPQVGNSGD) are disordered. 2 stretches are compositionally biased toward polar residues: residues 158–172 (ALGT…SPLS) and 199–215 (QCTS…NSGD). Positions 231–306 (VAYEDLSVDY…TSGGLFGVVP (76 aa)) constitute a KRAB domain. 10 C2H2-type zinc fingers span residues 383 to 405 (YRCD…QRIH), 411 to 433 (YECN…LRTH), 439 to 461 (YECS…QRLH), 467 to 489 (YKCN…QRTH), 495 to 517 (YECN…QVLH), 523 to 545 (YKCN…QRIH), 551 to 573 (YECS…QSLH), 579 to 601 (YKCS…ERIH), 607 to 629 (FECS…QRLH), and 635 to 657 (YKCN…QRIH). The segment at 663 to 685 (YECNECGKVFSYSSSLMVHQRTH) adopts a C2H2-type 11; degenerate zinc-finger fold. 2 consecutive C2H2-type zinc fingers follow at residues 691-713 (YKCN…QRVH) and 719-741 (YECS…QRTH). A disordered region spans residues 735 to 754 (NHHQRTHTGEKSSGLAWSVS).

This sequence belongs to the krueppel C2H2-type zinc-finger protein family.

The protein localises to the nucleus. May be involved in transcriptional regulation. The polypeptide is Zinc finger protein with KRAB and SCAN domains 7 (ZKSCAN7) (Homo sapiens (Human)).